The chain runs to 629 residues: tRNA uridine 5-carboxymethylaminomethyl modification enzyme MnmG (629 aa).

14–19 (GAGHAG) is a binding site for FAD. Residue 274–288 (GPRYCPSIEDKVVRF) participates in NAD(+) binding.

It belongs to the MnmG family. Homodimer. Heterotetramer of two MnmE and two MnmG subunits. FAD serves as cofactor.

The protein localises to the cytoplasm. Its function is as follows. NAD-binding protein involved in the addition of a carboxymethylaminomethyl (cmnm) group at the wobble position (U34) of certain tRNAs, forming tRNA-cmnm(5)s(2)U34. This Xylella fastidiosa (strain Temecula1 / ATCC 700964) protein is tRNA uridine 5-carboxymethylaminomethyl modification enzyme MnmG.